Reading from the N-terminus, the 382-residue chain is Anhydro-N-acetylmuramic acid kinase (382 aa).

9-16 (GTSLDGID) serves as a coordination point for ATP.

The protein belongs to the anhydro-N-acetylmuramic acid kinase family.

It carries out the reaction 1,6-anhydro-N-acetyl-beta-muramate + ATP + H2O = N-acetyl-D-muramate 6-phosphate + ADP + H(+). The protein operates within amino-sugar metabolism; 1,6-anhydro-N-acetylmuramate degradation. It functions in the pathway cell wall biogenesis; peptidoglycan recycling. Its function is as follows. Catalyzes the specific phosphorylation of 1,6-anhydro-N-acetylmuramic acid (anhMurNAc) with the simultaneous cleavage of the 1,6-anhydro ring, generating MurNAc-6-P. Is required for the utilization of anhMurNAc either imported from the medium or derived from its own cell wall murein, and thus plays a role in cell wall recycling. The sequence is that of Anhydro-N-acetylmuramic acid kinase from Bacillus cereus (strain ZK / E33L).